The sequence spans 457 residues: Multidrug resistance protein MdtK (457 aa).

Transmembrane regions (helical) follow at residues 11-31, 53-73, 93-113, 127-147, 160-180, 188-208, 243-263, 280-300, 316-336, 357-377, 387-407, and 418-438; these read LLAL…MGVV, IWLP…PIIA, WLAI…KFLI, AVGF…YQVL, GMVI…IFIY, LGGV…FLLM, LPIA…ALLI, FSSL…IRVG, YTGI…SIIL, LMLF…GAGV, IFYI…YILG, and PQGF…MIFA.

It belongs to the multi antimicrobial extrusion (MATE) (TC 2.A.66.1) family. MdtK subfamily.

It localises to the cell inner membrane. In terms of biological role, multidrug efflux pump that functions probably as a Na(+)/drug antiporter. This Photorhabdus laumondii subsp. laumondii (strain DSM 15139 / CIP 105565 / TT01) (Photorhabdus luminescens subsp. laumondii) protein is Multidrug resistance protein MdtK.